We begin with the raw amino-acid sequence, 227 residues long: A-type potassium channel modulatory protein KCNIP1 (227 aa).

The 57-residue stretch at 38 to 94 (LEMTMVCHRPEGLEQLEAQTNFTKRELQVLYRGFKNECPSGVVNEDTFKQIYAQFFP) folds into the EF-hand 1; degenerate domain. EF-hand domains lie at 97–132 (DAST…LLRG), 133–168 (TVHE…IYDM), and 181–216 (TPRQ…DDNI). Residues Asp146, Asn148, Asp150, Tyr152, Glu157, Asp194, Asn196, Asp198, and Glu205 each coordinate Ca(2+). The segment at 214–227 (DNIMRSLQLFQNVM) is interaction with KCND2.

Belongs to the recoverin family. Component of heteromultimeric potassium channels. Identified in potassium channel complexes containing KCND1, KCND2, KCND3, KCNIP1, KCNIP2, KCNIP3, KCNIP4, DPP6 and DPP10. Part of a heterooctamer composed of the tetrameric channel and four KCNIP1 chains. Probably part of a complex consisting of KCNIP1, KCNIP2 isoform 3 and KCND2. Self-associates to form homodimers and homotetramers. Interacts with KCNIP2 isoform 3 in a calcium-dependent manner. Interacts with Naja atra venom CTX3. Interacts with KCND2; this interaction mediates the capture of both the N- and C-terminus of KCND2, thus preventing KCND2 N-type inactivation and modulates the channel gating kinetics. Interacts with KCND3; each KCNIP1 monomer interacts with two adjacent KCND3 subunits, through both the N-terminal inactivation ball of a KCND3 subunit and a C-terminal helix from the adjacent KCND3 subunit, clamping them together; this interaction stabilizes the tetrameric form and modulates the channel gating kinetics namely channel activation and inactivation kinetics and rate of recovery from inactivation. In terms of tissue distribution, isoform 1 and isoform 2 are expressed in brain and kidney. Isoform 1 is also expressed in liver, pancreas, skeletal muscle, small intestine and testis. Isoform 2 is also expressed in lung, pancreas, leukocytes, prostate and thymus.

Its subcellular location is the cell membrane. It is found in the cytoplasm. It localises to the cell projection. The protein localises to the dendrite. Regulatory subunit of Kv4/D (Shal)-type voltage-gated rapidly inactivating A-type potassium channels. Regulates channel density, inactivation kinetics and rate of recovery from inactivation in a calcium-dependent and isoform-specific manner. In vitro, modulates KCND1/Kv4.1 and KCND2/Kv4.2 currents. Increases the presence of KCND2 at the cell surface. The polypeptide is A-type potassium channel modulatory protein KCNIP1 (Homo sapiens (Human)).